Consider the following 283-residue polypeptide: Elongation factor Ts (283 aa).

Residues 84-87 (TDFV) form an involved in Mg(2+) ion dislocation from EF-Tu region.

It belongs to the EF-Ts family.

It localises to the cytoplasm. Functionally, associates with the EF-Tu.GDP complex and induces the exchange of GDP to GTP. It remains bound to the aminoacyl-tRNA.EF-Tu.GTP complex up to the GTP hydrolysis stage on the ribosome. This is Elongation factor Ts from Bifidobacterium longum (strain DJO10A).